Here is a 425-residue protein sequence, read N- to C-terminus: Adenylosuccinate synthetase (425 aa).

Residues 12–18 and 40–42 each bind GTP; these read GDEGKGK and GHT. Catalysis depends on aspartate 13, which acts as the Proton acceptor. Aspartate 13 and glycine 40 together coordinate Mg(2+). IMP is bound by residues 13–16, 38–41, threonine 130, arginine 144, glutamine 224, threonine 239, and arginine 301; these read DEGK and NAGH. Histidine 41 functions as the Proton donor in the catalytic mechanism. 297 to 303 is a substrate binding site; the sequence is TVSNRRR. GTP contacts are provided by residues arginine 303, 329 to 331, and 411 to 413; these read KLD and STS.

Belongs to the adenylosuccinate synthetase family. In terms of assembly, homodimer. Mg(2+) serves as cofactor.

The protein resides in the cytoplasm. It carries out the reaction IMP + L-aspartate + GTP = N(6)-(1,2-dicarboxyethyl)-AMP + GDP + phosphate + 2 H(+). It functions in the pathway purine metabolism; AMP biosynthesis via de novo pathway; AMP from IMP: step 1/2. Its function is as follows. Plays an important role in the de novo pathway of purine nucleotide biosynthesis. Catalyzes the first committed step in the biosynthesis of AMP from IMP. The polypeptide is Adenylosuccinate synthetase (Wolbachia pipientis wMel).